Here is a 344-residue protein sequence, read N- to C-terminus: Glyceraldehyde-3-phosphate dehydrogenase (344 aa).

Residues 11-12 (TI) and Gly-110 each bind NAD(+). 139 to 141 (SCN) is a binding site for D-glyceraldehyde 3-phosphate. Catalysis depends on Cys-140, which acts as the Nucleophile. Arg-169 is a binding site for NAD(+). 195–196 (HG) provides a ligand contact to D-glyceraldehyde 3-phosphate. Position 302 (Gln-302) interacts with NAD(+).

Belongs to the glyceraldehyde-3-phosphate dehydrogenase family. In terms of assembly, homotetramer.

The protein resides in the cytoplasm. It carries out the reaction D-glyceraldehyde 3-phosphate + phosphate + NADP(+) = (2R)-3-phospho-glyceroyl phosphate + NADPH + H(+). The enzyme catalyses D-glyceraldehyde 3-phosphate + phosphate + NAD(+) = (2R)-3-phospho-glyceroyl phosphate + NADH + H(+). It participates in carbohydrate degradation; glycolysis; pyruvate from D-glyceraldehyde 3-phosphate: step 1/5. This Pyrobaculum islandicum (strain DSM 4184 / JCM 9189 / GEO3) protein is Glyceraldehyde-3-phosphate dehydrogenase.